Reading from the N-terminus, the 90-residue chain is Small ribosomal subunit protein bS18 (90 aa).

The protein belongs to the bacterial ribosomal protein bS18 family. As to quaternary structure, part of the 30S ribosomal subunit. Forms a tight heterodimer with protein bS6.

Its function is as follows. Binds as a heterodimer with protein bS6 to the central domain of the 16S rRNA, where it helps stabilize the platform of the 30S subunit. This Bordetella petrii (strain ATCC BAA-461 / DSM 12804 / CCUG 43448) protein is Small ribosomal subunit protein bS18.